Consider the following 190-residue polypeptide: NAD(P)H-quinone oxidoreductase subunit I (190 aa).

4Fe-4S ferredoxin-type domains follow at residues Gly-55–Thr-84 and Lys-95–Glu-124. [4Fe-4S] cluster contacts are provided by Cys-64, Cys-67, Cys-70, Cys-74, Cys-104, Cys-107, Cys-110, and Cys-114. Residues Ile-169–Asp-190 form a disordered region.

The protein belongs to the complex I 23 kDa subunit family. NDH-1 is composed of at least 11 different subunits. It depends on [4Fe-4S] cluster as a cofactor.

Its subcellular location is the cellular thylakoid membrane. The enzyme catalyses a plastoquinone + NADH + (n+1) H(+)(in) = a plastoquinol + NAD(+) + n H(+)(out). It catalyses the reaction a plastoquinone + NADPH + (n+1) H(+)(in) = a plastoquinol + NADP(+) + n H(+)(out). NDH-1 shuttles electrons from an unknown electron donor, via FMN and iron-sulfur (Fe-S) centers, to quinones in the respiratory and/or the photosynthetic chain. The immediate electron acceptor for the enzyme in this species is believed to be plastoquinone. Couples the redox reaction to proton translocation, and thus conserves the redox energy in a proton gradient. The polypeptide is NAD(P)H-quinone oxidoreductase subunit I (Microcystis aeruginosa (strain NIES-843 / IAM M-2473)).